A 147-amino-acid polypeptide reads, in one-letter code: Large ribosomal subunit protein uL13 (147 aa).

It belongs to the universal ribosomal protein uL13 family. In terms of assembly, part of the 50S ribosomal subunit.

This protein is one of the early assembly proteins of the 50S ribosomal subunit, although it is not seen to bind rRNA by itself. It is important during the early stages of 50S assembly. This chain is Large ribosomal subunit protein uL13, found in Lactobacillus delbrueckii subsp. bulgaricus (strain ATCC 11842 / DSM 20081 / BCRC 10696 / JCM 1002 / NBRC 13953 / NCIMB 11778 / NCTC 12712 / WDCM 00102 / Lb 14).